Here is a 122-residue protein sequence, read N- to C-terminus: MYSMAFLASSGLVANSSATVFKLNRALNLLAKTVLPDLLTKMSLSCSRVHSSTFSWKCFSKLVDMFFFFFLAWYVRRTTVYPNLNLELPSNIHVYSLDLPYVIYMIKTFQLIEKNFLSSHAG.

The first 18 residues, 1-18 (MYSMAFLASSGLVANSSA), serve as a signal peptide directing secretion. N-linked (GlcNAc...) asparagine glycosylation occurs at asparagine 15.

This is an uncharacterized protein from Saccharomyces cerevisiae (strain ATCC 204508 / S288c) (Baker's yeast).